Consider the following 417-residue polypeptide: Serine hydroxymethyltransferase (417 aa).

Residues leucine 121 and 125–127 (GHL) each bind (6S)-5,6,7,8-tetrahydrofolate. Lysine 230 carries the N6-(pyridoxal phosphate)lysine modification. A (6S)-5,6,7,8-tetrahydrofolate-binding site is contributed by 355–357 (SPF).

It belongs to the SHMT family. As to quaternary structure, homodimer. Pyridoxal 5'-phosphate serves as cofactor.

It is found in the cytoplasm. It catalyses the reaction (6R)-5,10-methylene-5,6,7,8-tetrahydrofolate + glycine + H2O = (6S)-5,6,7,8-tetrahydrofolate + L-serine. It functions in the pathway one-carbon metabolism; tetrahydrofolate interconversion. It participates in amino-acid biosynthesis; glycine biosynthesis; glycine from L-serine: step 1/1. Catalyzes the reversible interconversion of serine and glycine with tetrahydrofolate (THF) serving as the one-carbon carrier. This reaction serves as the major source of one-carbon groups required for the biosynthesis of purines, thymidylate, methionine, and other important biomolecules. Also exhibits THF-independent aldolase activity toward beta-hydroxyamino acids, producing glycine and aldehydes, via a retro-aldol mechanism. This chain is Serine hydroxymethyltransferase, found in Legionella pneumophila (strain Corby).